Here is a 332-residue protein sequence, read N- to C-terminus: GTP 3',8-cyclase (332 aa).

Residues 9–234 (TFGRRISYLR…DSDHRTGGPS (226 aa)) form the Radical SAM core domain. Position 18 (Arg18) interacts with GTP. The [4Fe-4S] cluster site is built by Cys25 and Cys29. Residue Tyr31 participates in S-adenosyl-L-methionine binding. Cys32 contacts [4Fe-4S] cluster. Position 67 (Arg67) interacts with GTP. Residue Gly71 participates in S-adenosyl-L-methionine binding. Residue Thr100 coordinates GTP. Residue Ser124 coordinates S-adenosyl-L-methionine. Lys160 provides a ligand contact to GTP. Met194 lines the S-adenosyl-L-methionine pocket. Positions 257 and 260 each coordinate [4Fe-4S] cluster. A GTP-binding site is contributed by 262–264 (RVR). Cys274 contributes to the [4Fe-4S] cluster binding site.

Belongs to the radical SAM superfamily. MoaA family. Monomer and homodimer. Requires [4Fe-4S] cluster as cofactor.

The enzyme catalyses GTP + AH2 + S-adenosyl-L-methionine = (8S)-3',8-cyclo-7,8-dihydroguanosine 5'-triphosphate + 5'-deoxyadenosine + L-methionine + A + H(+). It participates in cofactor biosynthesis; molybdopterin biosynthesis. Its function is as follows. Catalyzes the cyclization of GTP to (8S)-3',8-cyclo-7,8-dihydroguanosine 5'-triphosphate. The sequence is that of GTP 3',8-cyclase from Erythrobacter litoralis (strain HTCC2594).